The following is a 477-amino-acid chain: ATP synthase subunit beta, chloroplastic (477 aa).

Position 156–163 (156–163 (GGAGVGKT)) interacts with ATP.

This sequence belongs to the ATPase alpha/beta chains family. In terms of assembly, F-type ATPases have 2 components, CF(1) - the catalytic core - and CF(0) - the membrane proton channel. CF(1) has five subunits: alpha(3), beta(3), gamma(1), delta(1), epsilon(1). CF(0) has four main subunits: a(1), b(1), b'(1) and c(9-12).

It localises to the plastid. The protein localises to the chloroplast thylakoid membrane. It catalyses the reaction ATP + H2O + 4 H(+)(in) = ADP + phosphate + 5 H(+)(out). Produces ATP from ADP in the presence of a proton gradient across the membrane. The catalytic sites are hosted primarily by the beta subunits. The protein is ATP synthase subunit beta, chloroplastic of Bigelowiella natans (Pedinomonas minutissima).